We begin with the raw amino-acid sequence, 232 residues long: Phosphatidylserine decarboxylase proenzyme (232 aa).

The active-site Schiff-base intermediate with substrate; via pyruvic acid is Ser190. Position 190 is a pyruvic acid (Ser); by autocatalysis (Ser190).

It belongs to the phosphatidylserine decarboxylase family. PSD-A subfamily. In terms of assembly, heterodimer of a large membrane-associated beta subunit and a small pyruvoyl-containing alpha subunit. Requires pyruvate as cofactor. In terms of processing, is synthesized initially as an inactive proenzyme. Formation of the active enzyme involves a self-maturation process in which the active site pyruvoyl group is generated from an internal serine residue via an autocatalytic post-translational modification. Two non-identical subunits are generated from the proenzyme in this reaction, and the pyruvate is formed at the N-terminus of the alpha chain, which is derived from the carboxyl end of the proenzyme. The post-translation cleavage follows an unusual pathway, termed non-hydrolytic serinolysis, in which the side chain hydroxyl group of the serine supplies its oxygen atom to form the C-terminus of the beta chain, while the remainder of the serine residue undergoes an oxidative deamination to produce ammonia and the pyruvoyl prosthetic group on the alpha chain.

The protein resides in the cell membrane. It carries out the reaction a 1,2-diacyl-sn-glycero-3-phospho-L-serine + H(+) = a 1,2-diacyl-sn-glycero-3-phosphoethanolamine + CO2. It functions in the pathway phospholipid metabolism; phosphatidylethanolamine biosynthesis; phosphatidylethanolamine from CDP-diacylglycerol: step 2/2. In terms of biological role, catalyzes the formation of phosphatidylethanolamine (PtdEtn) from phosphatidylserine (PtdSer). The chain is Phosphatidylserine decarboxylase proenzyme from Rhizobium johnstonii (strain DSM 114642 / LMG 32736 / 3841) (Rhizobium leguminosarum bv. viciae).